We begin with the raw amino-acid sequence, 95 residues long: Protein TusB (95 aa).

Belongs to the DsrH/TusB family. Heterohexamer, formed by a dimer of trimers. The hexameric TusBCD complex contains 2 copies each of TusB, TusC and TusD. The TusBCD complex interacts with TusE.

The protein localises to the cytoplasm. Part of a sulfur-relay system required for 2-thiolation of 5-methylaminomethyl-2-thiouridine (mnm(5)s(2)U) at tRNA wobble positions. The chain is Protein TusB from Escherichia coli (strain ATCC 8739 / DSM 1576 / NBRC 3972 / NCIMB 8545 / WDCM 00012 / Crooks).